The following is a 306-amino-acid chain: uncharacterized protein (306 aa).

This is an uncharacterized protein from Saccharomyces cerevisiae (strain ATCC 204508 / S288c) (Baker's yeast).